Here is a 96-residue protein sequence, read N- to C-terminus: MGCCGCGSCGGCGGGCGGCGGGCGGGCGGGCGSCTTCRCYRVGCCSSCCPCCRGCCGGCCSTPVICCCRRTCGSCGCGCGKGCCQQKGCCQKQCCC.

The tract at residues 4–80 (CGCGSCGGCG…TCGSCGCGCG (77 aa)) is 14 X 2 AA repeats of CG.

The protein belongs to the KRTAP type 28 family.

In terms of biological role, in the hair cortex, hair keratin intermediate filaments are embedded in an interfilamentous matrix, consisting of hair keratin-associated proteins (KRTAP), which are essential for the formation of a rigid and resistant hair shaft through their extensive disulfide bond cross-linking with abundant cysteine residues of hair keratins. The matrix proteins include the high-sulfur and high-glycine-tyrosine keratins. The protein is Small cysteine and glycine repeat-containing protein 7 of Homo sapiens (Human).